The primary structure comprises 103 residues: Small ribosomal subunit protein uS10 (103 aa).

Belongs to the universal ribosomal protein uS10 family. In terms of assembly, part of the 30S ribosomal subunit.

In terms of biological role, involved in the binding of tRNA to the ribosomes. The chain is Small ribosomal subunit protein uS10 from Salinibacter ruber (strain DSM 13855 / M31).